We begin with the raw amino-acid sequence, 125 residues long: Holo-[acyl-carrier-protein] synthase (125 aa).

Mg(2+)-binding residues include D6 and E55.

Belongs to the P-Pant transferase superfamily. AcpS family. Requires Mg(2+) as cofactor.

Its subcellular location is the cytoplasm. The enzyme catalyses apo-[ACP] + CoA = holo-[ACP] + adenosine 3',5'-bisphosphate + H(+). In terms of biological role, transfers the 4'-phosphopantetheine moiety from coenzyme A to a Ser of acyl-carrier-protein. The chain is Holo-[acyl-carrier-protein] synthase from Chlorobium phaeovibrioides (strain DSM 265 / 1930) (Prosthecochloris vibrioformis (strain DSM 265)).